The sequence spans 56 residues: Small ribosomal subunit protein bS21 (56 aa).

The protein belongs to the bacterial ribosomal protein bS21 family.

The polypeptide is Small ribosomal subunit protein bS21 (rpsU) (Geobacillus stearothermophilus (Bacillus stearothermophilus)).